The primary structure comprises 746 residues: Root phototropism protein 3 (746 aa).

The segment at Met-1–Gly-24 is disordered. Residues Gly-9 to Arg-19 show a composition bias toward gly residues. Residues Ser-54–Ala-122 form the BTB domain. Residues Asp-250–Lys-605 form the NPH3 domain. Residues Glu-461–Asn-500 form a disordered region. The span at Ser-466–Ser-478 shows a compositional bias: low complexity. Position 546 is a phosphotyrosine (Tyr-546). A disordered region spans residues Ser-708–Ser-746. Basic residues predominate over residues Pro-735 to Ser-746.

The protein belongs to the NPH3 family. As to quaternary structure, interacts with PKS1, PKS2, RPT2, PHOT1 and PHOT2. Subunit of a complex made of CAR6, PHOT1 and RPT3/NPH3. Post-translationally, phosphorylated in the dark. Expressed in hypocotyls, guard cells and mesophyll cells.

It is found in the cell membrane. It functions in the pathway protein modification; protein ubiquitination. In terms of biological role, may act as a substrate-specific adapter of an E3 ubiquitin-protein ligase complex (CUL3-RBX1-BTB) which mediates the ubiquitination and subsequent proteasomal degradation of target proteins. Signal transducer of the phototropic response and photo-induced movements. Involved in the phot1 pathway under low blue light (LBL) fluence rate and in the phot2 pathway under higher fluence rate of blue light (HBL). Necessary for root and hypocotyl phototropisms, but not for the regulation of stomata opening. Not involved in chloroplast accumulation and translocation. The polypeptide is Root phototropism protein 3 (RPT3) (Arabidopsis thaliana (Mouse-ear cress)).